A 156-amino-acid chain; its full sequence is Arginine repressor (156 aa).

Belongs to the ArgR family.

It is found in the cytoplasm. The protein operates within amino-acid biosynthesis; L-arginine biosynthesis [regulation]. Functionally, regulates arginine biosynthesis genes. This chain is Arginine repressor, found in Vibrio atlanticus (strain LGP32) (Vibrio splendidus (strain Mel32)).